Here is a 567-residue protein sequence, read N- to C-terminus: 2-succinyl-5-enolpyruvyl-6-hydroxy-3-cyclohexene-1-carboxylate synthase (567 aa).

It belongs to the TPP enzyme family. MenD subfamily. As to quaternary structure, homodimer. Mg(2+) is required as a cofactor. It depends on Mn(2+) as a cofactor. Thiamine diphosphate serves as cofactor.

It carries out the reaction isochorismate + 2-oxoglutarate + H(+) = 5-enolpyruvoyl-6-hydroxy-2-succinyl-cyclohex-3-ene-1-carboxylate + CO2. Its pathway is quinol/quinone metabolism; 1,4-dihydroxy-2-naphthoate biosynthesis; 1,4-dihydroxy-2-naphthoate from chorismate: step 2/7. It functions in the pathway quinol/quinone metabolism; menaquinone biosynthesis. Catalyzes the thiamine diphosphate-dependent decarboxylation of 2-oxoglutarate and the subsequent addition of the resulting succinic semialdehyde-thiamine pyrophosphate anion to isochorismate to yield 2-succinyl-5-enolpyruvyl-6-hydroxy-3-cyclohexene-1-carboxylate (SEPHCHC). This chain is 2-succinyl-5-enolpyruvyl-6-hydroxy-3-cyclohexene-1-carboxylate synthase, found in Yersinia pestis bv. Antiqua (strain Angola).